The chain runs to 253 residues: Ubiquinone/menaquinone biosynthesis C-methyltransferase UbiE (253 aa).

S-adenosyl-L-methionine-binding positions include threonine 76, aspartate 97, and 125–126 (NA).

Belongs to the class I-like SAM-binding methyltransferase superfamily. MenG/UbiE family.

It catalyses the reaction a 2-demethylmenaquinol + S-adenosyl-L-methionine = a menaquinol + S-adenosyl-L-homocysteine + H(+). The enzyme catalyses a 2-methoxy-6-(all-trans-polyprenyl)benzene-1,4-diol + S-adenosyl-L-methionine = a 5-methoxy-2-methyl-3-(all-trans-polyprenyl)benzene-1,4-diol + S-adenosyl-L-homocysteine + H(+). It functions in the pathway quinol/quinone metabolism; menaquinone biosynthesis; menaquinol from 1,4-dihydroxy-2-naphthoate: step 2/2. The protein operates within cofactor biosynthesis; ubiquinone biosynthesis. Its function is as follows. Methyltransferase required for the conversion of demethylmenaquinol (DMKH2) to menaquinol (MKH2) and the conversion of 2-polyprenyl-6-methoxy-1,4-benzoquinol (DDMQH2) to 2-polyprenyl-3-methyl-6-methoxy-1,4-benzoquinol (DMQH2). In Rhodopseudomonas palustris (strain ATCC BAA-98 / CGA009), this protein is Ubiquinone/menaquinone biosynthesis C-methyltransferase UbiE.